A 254-amino-acid chain; its full sequence is Glutathione S-transferase F14 (254 aa).

One can recognise a GST N-terminal domain in the interval 4-85 (SKMKLHCGFI…YLAEQYKDVG (82 aa)). Residues 42 to 43 (AK), 56 to 57 (EV), and 69 to 70 (EP) contribute to the glutathione site. Residues 92 to 231 (DPKKRAIMSM…DLMKQRRLPI (140 aa)) enclose the GST C-terminal domain.

Belongs to the GST superfamily. Phi family.

Its subcellular location is the cytoplasm. It localises to the cytosol. It catalyses the reaction RX + glutathione = an S-substituted glutathione + a halide anion + H(+). Functionally, may be involved in the conjugation of reduced glutathione to a wide number of exogenous and endogenous hydrophobic electrophiles and have a detoxification role against certain herbicides. This chain is Glutathione S-transferase F14, found in Arabidopsis thaliana (Mouse-ear cress).